Reading from the N-terminus, the 354-residue chain is MESALAVPRLPPHDPGTPVLSVVDMHTGGEPLRIVLAGCPEVSGPTLLAKRRYMRQHLDHVRRRLMFEPRGHRDMYGAVLVPSELPDAHLGVLFLHNEGYSSMCGHAVLALGRFALDFGLVPAPPAGTREARVNIHCPCGLVTAFVACEDGRSHGPVRFHSVPAFVLATDLMVDVPGHGKVMVDIAYGGAFYAFVTAEKLGLDICSAKTRDLVDAASAVTEAVKAQFKINHPDSEDLAFLYGTILTDGKDAYTKEPTTNICVFADEQVDRSPTGSGVTARIALQYHKGLLELNQMRAFKSSATGSVFTGKAVREAKCGDFKAVIVEVSGQAHYTGTASFIIEDDDPLRDGFLLK.

Cys104 (proton acceptor) is an active-site residue. Substrate-binding positions include 105–106 (GH), Asp269, and 274–275 (GS).

The protein belongs to the proline racemase family. As to quaternary structure, homodimer. As to expression, ubiquitously expressed.

The catalysed reaction is trans-3-hydroxy-L-proline = 1-pyrroline-2-carboxylate + H2O. In terms of biological role, catalyzes the dehydration of trans-3-hydroxy-L-proline to Delta(1)-pyrroline-2-carboxylate (Pyr2C). May be required to degrade trans-3-hydroxy-L-proline from the diet and originating from the degradation of proteins such as collagen-IV that contain it. The chain is Trans-3-hydroxy-L-proline dehydratase (L3HYPDH) from Homo sapiens (Human).